Consider the following 157-residue polypeptide: Dihydrofolate reductase type 15 (157 aa).

The DHFR domain maps to 2–156 (KLSLMAAISK…INYSYQIWQK (155 aa)).

This sequence belongs to the dihydrofolate reductase family. As to quaternary structure, homodimer.

It carries out the reaction (6S)-5,6,7,8-tetrahydrofolate + NADP(+) = 7,8-dihydrofolate + NADPH + H(+). Its pathway is cofactor biosynthesis; tetrahydrofolate biosynthesis; 5,6,7,8-tetrahydrofolate from 7,8-dihydrofolate: step 1/1. In terms of biological role, key enzyme in folate metabolism. Catalyzes an essential reaction for de novo glycine and purine synthesis, and for DNA precursor synthesis. The sequence is that of Dihydrofolate reductase type 15 (dhfrXV) from Escherichia coli.